Consider the following 237-residue polypeptide: MGRGKIEIKRIENTTNRQVTFSKRRGGLLKKAHELSVLCDAELGLIIFSSSGKLFEYSSASSSMKKIIERYQKVSGARITEYDNQHLYCEMTRMKNENEKLQTNIRRMMGEDLTSLTMTELHHLGQQLESASSRVRSRKNQLMLQQLENLRRKERILEDQNSHLCRLLAEQQAAVEGVQEPLLEFGVFCPPPDNKTAAAANAGPLHLGHHLPAFRLQPTQPNLQESSIVPNRPVLQL.

One can recognise an MADS-box domain in the interval 1 to 61 (MGRGKIEIKR…GKLFEYSSAS (61 aa)). Positions 84 to 174 (NQHLYCEMTR…CRLLAEQQAA (91 aa)) constitute a K-box domain.

As to expression, expression specific for female reproductive structures: strong at the adaxial base of the cupules, where ovules will later develop, then in the outermost cell layer of the nucellus, in the inner envelope, and in the inner half of the middle envelope at late stage of ovule development.

It localises to the nucleus. Its function is as follows. Probable transcription factor. The chain is MADS-box protein GGM13 (GGM13) from Gnetum gnemon (Spanish joint-fir).